A 719-amino-acid chain; its full sequence is Pesticidal crystal protein Cry1Ic (719 aa).

Belongs to the delta endotoxin family.

In terms of biological role, promotes colloidosmotic lysis by binding to the midgut epithelial cells of insects. This Bacillus thuringiensis protein is Pesticidal crystal protein Cry1Ic (cry1Ic).